A 190-amino-acid polypeptide reads, in one-letter code: Hypoxanthine/guanine phosphoribosyltransferase (190 aa).

The protein belongs to the purine/pyrimidine phosphoribosyltransferase family. Archaeal HPRT subfamily. Homodimer.

It localises to the cytoplasm. It carries out the reaction IMP + diphosphate = hypoxanthine + 5-phospho-alpha-D-ribose 1-diphosphate. The enzyme catalyses GMP + diphosphate = guanine + 5-phospho-alpha-D-ribose 1-diphosphate. It functions in the pathway purine metabolism; IMP biosynthesis via salvage pathway; IMP from hypoxanthine: step 1/1. Catalyzes a salvage reaction resulting in the formation of IMP that is energically less costly than de novo synthesis. The polypeptide is Hypoxanthine/guanine phosphoribosyltransferase (Methanohalobium evestigatum (strain ATCC BAA-1072 / DSM 3721 / NBRC 107634 / OCM 161 / Z-7303)).